The following is a 733-amino-acid chain: SWR1-complex protein 4 (733 aa).

Disordered regions lie at residues 1-34 (MTSHDVRDVLNLPSDHAGPRPSKKARTATPRPNL) and 98-128 (PDGTVQDGSAEGQDSAATADNSADKPEDSSF). The SANT domain occupies 146–217 (NTNLKHPDWT…DLKARYYEVA (72 aa)). Residues 247–299 (KQEQNRKRFAENTLKRSSDEAREEEALLLEIKRIMARTERFNEERRELYNRLD) are a coiled coil. Residues 371 to 384 (AASRRESLAASSTA) are compositionally biased toward low complexity. Disordered stretches follow at residues 371–488 (AASR…GSGP) and 564–733 (KKAE…KQKK). Composition is skewed to basic and acidic residues over residues 387-423 (NDHHEPPVREPPVRHERQESRSHHRNESRSERADRHG), 463-484 (PERRKLSEHEEQVYGVSHHDRL), 564-589 (KKAERERAAREAAEARGETVEKKGGE), and 610-653 (DDAK…KGEE). Positions 699–710 (GSSSGAGASSGA) are enriched in low complexity.

This sequence belongs to the SWC4 family. In terms of assembly, component of the SWR1 chromatin-remodeling complex and of the NuA4 histone acetyltransferase complex.

It localises to the nucleus. Functionally, component of the SWR1 complex which mediates the ATP-dependent exchange of histone H2A for the H2A variant H2A.Z leading to transcriptional regulation of selected genes by chromatin remodeling. Component of the NuA4 histone acetyltransferase complex which is involved in transcriptional activation of selected genes principally by acetylation of nucleosomal histone H4 and H2A. The NuA4 complex is also involved in DNA repair. The polypeptide is SWR1-complex protein 4 (crc-1) (Neurospora crassa (strain ATCC 24698 / 74-OR23-1A / CBS 708.71 / DSM 1257 / FGSC 987)).